Consider the following 416-residue polypeptide: Transcription factor IIIB 50 kDa subunit (416 aa).

The segment at 3–36 (NGSRCPDCGSSELVEDSHYSQSQLVCSDCGCVVT) adopts a TFIIB-type zinc-finger fold. 4 residues coordinate Zn(2+): C7, C10, C28, and C31. A run of 2 repeats spans residues 72-157 (DLRR…MQIV) and 173-249 (VKSY…SLAR). The tract at residues 108-114 (AARLQKK) is interaction with target DNA. Residues 317–385 (AEVETKQQQP…TGDEDISDSE (69 aa)) form a disordered region. A Phosphoserine modification is found at S350. The tract at residues 354-360 (LLPPCML) is required for the formation of a ternary complex with DNA and TBP; not required for interaction with TBP in the absence of DNA. Position 358 is a cysteine sulfenic acid (-SOH) (C358). The segment at 362–416 (PPKRTHTMPPDSVVTGDEDISDSEIEQYLRTPQEVRDFERAQAASRAAMSVPNPP) is required for interaction with TBP and formation of a ternary complex with DNA and TBP.

This sequence belongs to the TFIIB family. As to quaternary structure, component of TFIIIB complexes. The TFIIIB complex has two activities, alpha and beta. The TFIIIB-alpha activity complex is composed of TBP, BDP1, and a complex containing both BRF2 and at least four stably associated proteins; this complex inhibits the transcription by pol III via its phosphorylation by CK2; YY1 facilitates the TFIIIB-alpha complex formation. Interacts with TBP; this interaction promotes recruitment of BRF2 to TATA box-containing promoters. Interacts with TBP and the BURE sequence (GC-rich sequence downstream from the TATA box) to form a strong ternary complex which is joined by BDP1; this ternary complex stimulates pol III transcription. Forms a trimeric complex composed of TBP, BRF2 and mini-SNAPc complex (SNAP43, SNAP50, and the N-terminal third of SNAP190) on the promoter. Assembly of the TBP-BRF2 complex is stimulated by SNAP190. Interacts with MAF1 and SNAPC4. Post-translationally, in response to oxidative stress, Cys-358 is reversibly oxidized to cysteine sulfenic acid. Oxidation of Cys-358 impairs formation of a ternary complex with TBP and DNA and down-regulates expression of target genes in response to oxidative stress.

Its subcellular location is the nucleus. Its function is as follows. General activator of RNA polymerase III transcription. Factor exclusively required for RNA polymerase III transcription of genes with promoter elements upstream of the initiation sites. Contributes to the regulation of gene expression; functions as activator in the absence of oxidative stress. Down-regulates expression of target genes in response to oxidative stress. Overexpression protects cells against apoptosis in response to oxidative stress. The sequence is that of Transcription factor IIIB 50 kDa subunit (Brf2) from Rattus norvegicus (Rat).